A 501-amino-acid chain; its full sequence is Mitogen-activated protein kinase 16 (501 aa).

The Protein kinase domain occupies 22-313 (YEVTEVVGKG…AAEALTDPYF (292 aa)). ATP is bound by residues 28-36 (VGKGSYGVV) and lysine 51. Aspartate 148 functions as the Proton acceptor in the catalytic mechanism. Threonine 184 carries the phosphothreonine modification. Residues 184-186 (TDY) carry the TXY motif. Tyrosine 186 carries the post-translational modification Phosphotyrosine. The disordered stretch occupies residues 477–501 (DEESMSEYMNEAADGVPHKIAQLKT).

Belongs to the protein kinase superfamily. CMGC Ser/Thr protein kinase family. MAP kinase subfamily. Dually phosphorylated on Thr-184 and Tyr-186, which activates the enzyme.

It catalyses the reaction L-seryl-[protein] + ATP = O-phospho-L-seryl-[protein] + ADP + H(+). The catalysed reaction is L-threonyl-[protein] + ATP = O-phospho-L-threonyl-[protein] + ADP + H(+). Activated by threonine and tyrosine phosphorylation. This chain is Mitogen-activated protein kinase 16 (MPK16), found in Oryza sativa subsp. japonica (Rice).